Consider the following 1213-residue polypeptide: DNA-directed RNA polymerase subunit beta' (1213 aa).

C60, C62, C75, and C78 together coordinate Zn(2+). The Mg(2+) site is built by D450, D452, and D454. 4 residues coordinate Zn(2+): C819, C893, C900, and C903.

It belongs to the RNA polymerase beta' chain family. The RNAP catalytic core consists of 2 alpha, 1 beta, 1 beta' and 1 omega subunit. When a sigma factor is associated with the core the holoenzyme is formed, which can initiate transcription. The cofactor is Mg(2+). Zn(2+) serves as cofactor.

It carries out the reaction RNA(n) + a ribonucleoside 5'-triphosphate = RNA(n+1) + diphosphate. Its function is as follows. DNA-dependent RNA polymerase catalyzes the transcription of DNA into RNA using the four ribonucleoside triphosphates as substrates. The polypeptide is DNA-directed RNA polymerase subunit beta' (Streptococcus pyogenes serotype M1).